Here is a 380-residue protein sequence, read N- to C-terminus: Adaptive-response sensory kinase SasA (380 aa).

Residues 20 to 101 (LLFVANRPGD…QKVDYWWPRW (82 aa)) are kaiB-like domain, interacts with KaiC. Residues 157-380 (LLAHELRNPL…CFHFTLPVYS (224 aa)) form the Histidine kinase domain. Phosphohistidine; by autocatalysis is present on His160.

In terms of assembly, homotrimer with a small amount of possible homohexamer; a protein fragment of 109-380 is also a homotrimer. Interacts with KaiC, probably as 1 SasA trimer:1 KaiC homohexamer; unphosphorylated SasA has the highest affinity. Homodimer. Binds to the B-loop in the CI domain of KaiC; SasA and KaiB(fs) compete to bind to the CI domain. Binds preferentially to doubly phosphorylated KaiC. Autophosphorylates, probably on His-160.

The enzyme catalyses ATP + protein L-histidine = ADP + protein N-phospho-L-histidine.. In terms of biological role, member of the two-component regulatory system SasA/RpaA involved in genome-wide circadian gene expression. One of several clock output pathways. Participates in the Kai clock protein complex, the main circadian regulator in cyanobacteria, via its interaction with KaiC. KaiC enhances the autophosphorylation activity of SasA, which then transfers its phosphate group to RpaA to activate it. In addition to its output function, recruits fold-shifted KaiB (KaiB(fs)) to KaiC to cooperatively form the KaiB(6):KaiC(6) complex (independent of SasA kinase activity). Required for robustness of the circadian rhythm of gene expression and is involved in clock output, also required for adaptation to light/dark cycles. The sequence is that of Adaptive-response sensory kinase SasA from Thermosynechococcus vestitus (strain NIES-2133 / IAM M-273 / BP-1).